A 373-amino-acid chain; its full sequence is Anhydro-N-acetylmuramic acid kinase (373 aa).

Residue 12–19 participates in ATP binding; that stretch reads GTSLDGVD.

Belongs to the anhydro-N-acetylmuramic acid kinase family.

It carries out the reaction 1,6-anhydro-N-acetyl-beta-muramate + ATP + H2O = N-acetyl-D-muramate 6-phosphate + ADP + H(+). It functions in the pathway amino-sugar metabolism; 1,6-anhydro-N-acetylmuramate degradation. It participates in cell wall biogenesis; peptidoglycan recycling. Functionally, catalyzes the specific phosphorylation of 1,6-anhydro-N-acetylmuramic acid (anhMurNAc) with the simultaneous cleavage of the 1,6-anhydro ring, generating MurNAc-6-P. Is required for the utilization of anhMurNAc either imported from the medium or derived from its own cell wall murein, and thus plays a role in cell wall recycling. In Erwinia tasmaniensis (strain DSM 17950 / CFBP 7177 / CIP 109463 / NCPPB 4357 / Et1/99), this protein is Anhydro-N-acetylmuramic acid kinase.